We begin with the raw amino-acid sequence, 872 residues long: Valine--tRNA ligase (872 aa).

Positions 49-59 (PNVTGILHIGH) match the 'HIGH' region motif. Residues 531–535 (KMSKS) carry the 'KMSKS' region motif. Lys-534 contributes to the ATP binding site. Residues 810-871 (PLIARLKKQL…IQQELDLLEQ (62 aa)) adopt a coiled-coil conformation.

This sequence belongs to the class-I aminoacyl-tRNA synthetase family. ValS type 1 subfamily. Monomer.

It localises to the cytoplasm. The enzyme catalyses tRNA(Val) + L-valine + ATP = L-valyl-tRNA(Val) + AMP + diphosphate. Functionally, catalyzes the attachment of valine to tRNA(Val). As ValRS can inadvertently accommodate and process structurally similar amino acids such as threonine, to avoid such errors, it has a 'posttransfer' editing activity that hydrolyzes mischarged Thr-tRNA(Val) in a tRNA-dependent manner. This chain is Valine--tRNA ligase, found in Helicobacter pylori (strain J99 / ATCC 700824) (Campylobacter pylori J99).